The chain runs to 113 residues: Protein translation factor SUI1 homolog 2 (113 aa).

S2 bears the N-acetylserine mark.

The protein belongs to the SUI1 family.

In terms of biological role, probably involved in translation. In Arabidopsis thaliana (Mouse-ear cress), this protein is Protein translation factor SUI1 homolog 2.